The following is a 136-amino-acid chain: Glutamate-rich protein 4 (136 aa).

Residues 92 to 136 are disordered; that stretch reads EEEEEEEQEEKSCVEENKGPEEKQDEERSRSSYPAQRLPDFGMTI. Residues 101–121 show a composition bias toward basic and acidic residues; that stretch reads EKSCVEENKGPEEKQDEERSR.

This Mus musculus (Mouse) protein is Glutamate-rich protein 4 (Erich4).